The sequence spans 207 residues: ATP-dependent Clp protease proteolytic subunit 2 (207 aa).

Ser-102 acts as the Nucleophile in catalysis. Residue His-127 is part of the active site.

Belongs to the peptidase S14 family. As to quaternary structure, fourteen ClpP subunits assemble into 2 heptameric rings which stack back to back to give a disk-like structure with a central cavity, resembling the structure of eukaryotic proteasomes.

It is found in the cytoplasm. It catalyses the reaction Hydrolysis of proteins to small peptides in the presence of ATP and magnesium. alpha-casein is the usual test substrate. In the absence of ATP, only oligopeptides shorter than five residues are hydrolyzed (such as succinyl-Leu-Tyr-|-NHMec, and Leu-Tyr-Leu-|-Tyr-Trp, in which cleavage of the -Tyr-|-Leu- and -Tyr-|-Trp bonds also occurs).. Its function is as follows. Cleaves peptides in various proteins in a process that requires ATP hydrolysis. Has a chymotrypsin-like activity. Plays a major role in the degradation of misfolded proteins. The chain is ATP-dependent Clp protease proteolytic subunit 2 from Bifidobacterium longum (strain NCC 2705).